The chain runs to 174 residues: Small ribosomal subunit protein uS5 (174 aa).

The region spanning 19-82 (LREKMVAINR…DEARRKLKKI (64 aa)) is the S5 DRBM domain.

This sequence belongs to the universal ribosomal protein uS5 family. In terms of assembly, part of the 30S ribosomal subunit. Contacts proteins S4 and S8.

In terms of biological role, with S4 and S12 plays an important role in translational accuracy. Functionally, located at the back of the 30S subunit body where it stabilizes the conformation of the head with respect to the body. This chain is Small ribosomal subunit protein uS5, found in Aromatoleum aromaticum (strain DSM 19018 / LMG 30748 / EbN1) (Azoarcus sp. (strain EbN1)).